Here is a 331-residue protein sequence, read N- to C-terminus: GTP 3',8-cyclase (331 aa).

The 226-residue stretch at P6–P231 folds into the Radical SAM core domain. R15 is a GTP binding site. Residues C22 and C26 each contribute to the [4Fe-4S] cluster site. Y28 contacts S-adenosyl-L-methionine. C29 provides a ligand contact to [4Fe-4S] cluster. R64 contributes to the GTP binding site. G68 lines the S-adenosyl-L-methionine pocket. T98 provides a ligand contact to GTP. S122 is a binding site for S-adenosyl-L-methionine. K158 contacts GTP. Residue M192 participates in S-adenosyl-L-methionine binding. [4Fe-4S] cluster-binding residues include C255 and C258. Residue R260 to R262 coordinates GTP. C272 contributes to the [4Fe-4S] cluster binding site.

The protein belongs to the radical SAM superfamily. MoaA family. As to quaternary structure, monomer and homodimer. [4Fe-4S] cluster serves as cofactor.

It carries out the reaction GTP + AH2 + S-adenosyl-L-methionine = (8S)-3',8-cyclo-7,8-dihydroguanosine 5'-triphosphate + 5'-deoxyadenosine + L-methionine + A + H(+). The protein operates within cofactor biosynthesis; molybdopterin biosynthesis. Its function is as follows. Catalyzes the cyclization of GTP to (8S)-3',8-cyclo-7,8-dihydroguanosine 5'-triphosphate. This is GTP 3',8-cyclase from Mesorhizobium japonicum (strain LMG 29417 / CECT 9101 / MAFF 303099) (Mesorhizobium loti (strain MAFF 303099)).